The chain runs to 61 residues: Alpha-conotoxin-like Tx1.2 (61 aa).

The first 20 residues, 1-20 (MFTVFLLVVLATTVVSFTSG), serve as a signal peptide directing secretion. The propeptide occupies 21–42 (RSTFRGRNAAAKASGLVSLTDR). Pro-44 and Pro-50 each carry 4-hydroxyproline. Cystine bridges form between Cys-46–Cys-52 and Cys-47–Cys-60. Residues 48–50 (SHP) are ser-Xaa-Pro motif, crucial for potent interaction with nAChR.

The protein belongs to the conotoxin A superfamily. Expressed by the venom duct.

It localises to the secreted. Its function is as follows. Alpha-conotoxins act on postsynaptic membranes, they bind to the nicotinic acetylcholine receptors (nAChR) and thus inhibit them. This toxin also inhibits high voltage-activated (HVA) calcium channel currents in rat DRG neurons (8% inhibition at 1 uM toxin) probably by activating GABA(B) receptors (GABBR1 and/or GABBR2). This chain is Alpha-conotoxin-like Tx1.2, found in Conus textile (Cloth-of-gold cone).